The sequence spans 480 residues: Serine/threonine-protein kinase WAG2 (480 aa).

A Protein kinase domain is found at 88–396 (LKLIRHLGTG…AQDIKRHPFF (309 aa)). ATP is bound by residues 94-102 (LGTGNLGRV) and Lys117. The active-site Proton acceptor is the Asp213.

It belongs to the protein kinase superfamily. Ser/Thr protein kinase family. In terms of tissue distribution, expressed in root tips, lateral root primordia and emerging true leaf primordia.

It localises to the cytoplasm. Its subcellular location is the cytosol. It catalyses the reaction L-seryl-[protein] + ATP = O-phospho-L-seryl-[protein] + ADP + H(+). The catalysed reaction is L-threonyl-[protein] + ATP = O-phospho-L-threonyl-[protein] + ADP + H(+). Serine/threonine-protein kinase involved in the regulation of auxin signaling. Acts as a positive regulator of cellular auxin efflux and regulates organ development by enhancing PIN-mediated polar auxin transport. Phosphorylates conserved serine residues in the PIN auxin efflux carriers. Phosphorylation of PIN proteins is required and sufficient for apical-basal PIN polarity that enables directional intercellular auxin fluxes, which mediate differential growth, tissue patterning and organogenesis. Acts as a suppressor of root waving. In Arabidopsis thaliana (Mouse-ear cress), this protein is Serine/threonine-protein kinase WAG2 (WAG2).